We begin with the raw amino-acid sequence, 408 residues long: Adenylosuccinate synthetase (408 aa).

Residues 12 to 18 (GDEGKGK) and 40 to 42 (GHT) each bind GTP. The Proton acceptor role is filled by Asp-13. Asp-13 and Gly-40 together coordinate Mg(2+). IMP is bound by residues 13 to 16 (DEGK), 38 to 41 (NAGH), Thr-121, Arg-135, Gln-213, Thr-228, and Arg-292. Catalysis depends on His-41, which acts as the Proton donor. 288-294 (TTTGRPR) is a substrate binding site. GTP contacts are provided by residues Arg-294, 320–322 (KLD), and 393–395 (STS).

Belongs to the adenylosuccinate synthetase family. Homodimer. It depends on Mg(2+) as a cofactor.

Its subcellular location is the cytoplasm. It catalyses the reaction IMP + L-aspartate + GTP = N(6)-(1,2-dicarboxyethyl)-AMP + GDP + phosphate + 2 H(+). The protein operates within purine metabolism; AMP biosynthesis via de novo pathway; AMP from IMP: step 1/2. Plays an important role in the de novo pathway of purine nucleotide biosynthesis. Catalyzes the first committed step in the biosynthesis of AMP from IMP. The sequence is that of Adenylosuccinate synthetase from Thermus thermophilus (strain ATCC BAA-163 / DSM 7039 / HB27).